Reading from the N-terminus, the 416-residue chain is Orexin/Hypocretin receptor type 1 (416 aa).

The tract at residues 1–22 is disordered; sequence MEPSATPGAQPGVPTSSGEPFH. The Extracellular portion of the chain corresponds to 1-46; that stretch reads MEPSATPGAQPGVPTSSGEPFHLPPDYEDEFLRYLWRDYLYPKQYE. The interval 26-41 is required for response to orexin-A; the sequence is DYEDEFLRYLWRDYLY. A helical transmembrane segment spans residues 47 to 67; the sequence is WVLIAAYVAVFLIALVGNTLV. Over 68 to 82 the chain is Cytoplasmic; sequence CLAVWRNHHMRTVTN. Residues 83–105 traverse the membrane as a helical segment; it reads YFIVNLSLADVLVTAICLPASLL. Residues 106 to 119 are Extracellular-facing; sequence VDITESWLFGQALC. Cys119 and Cys202 are oxidised to a cystine. A helical transmembrane segment spans residues 120–140; it reads KVIPYLQAVSVSVAVLTLSFI. The Cytoplasmic segment spans residues 141 to 160; that stretch reads ALDRWYAICHPLLFKSTARR. The chain crosses the membrane as a helical span at residues 161–182; that stretch reads ARGSILGIWAVSLAVMVPQAAV. Over 183-213 the chain is Extracellular; sequence MECSSVLPELANRTRLFSVCDEHWADELYPK. Asn194 carries an N-linked (GlcNAc...) asparagine glycan. Residues 214 to 235 form a helical membrane-spanning segment; sequence IYHSCFFIVTYLAPLGLMAMAY. Topologically, residues 236–298 are cytoplasmic; sequence FQIFRKLWGR…QMRARRKTAK (63 aa). The chain crosses the membrane as a helical span at residues 299 to 321; the sequence is MLMVVLLVFALCYLPISVLNVLK. At 322–336 the chain is on the extracellular side; it reads RVFGMFRQASDREAV. The helical transmembrane segment at 337-360 threads the bilayer; that stretch reads YACFTFSHWLVYANSAANPIIYNF. Residues 361–416 lie on the Cytoplasmic side of the membrane; the sequence is LSGKFREQFKAAFSCCLPGLGPGSSARHKSLSLQSRCSVSKVSEHVVLTTVTTVLS.

This sequence belongs to the G-protein coupled receptor 1 family. In terms of tissue distribution, widely expressed.

It is found in the cell membrane. Moderately selective excitatory receptor for orexin-A and, with a lower affinity, for orexin-B neuropeptide. Triggers an increase in cytoplasmic Ca(2+) levels in response to orexin-A binding. The protein is Orexin/Hypocretin receptor type 1 of Mus musculus (Mouse).